A 163-amino-acid chain; its full sequence is Putative H/ACA ribonucleoprotein complex subunit 2-like protein (163 aa).

This sequence belongs to the eukaryotic ribosomal protein eL8 family. As to quaternary structure, component of the small nucleolar ribonucleoprotein particle containing H/ACA-type snoRNAs (H/ACA snoRNPs).

The protein localises to the nucleus. Its subcellular location is the nucleolus. In terms of biological role, required for ribosome biogenesis. Part of a complex which catalyzes pseudouridylation of rRNA. This involves the isomerization of uridine such that the ribose is subsequently attached to C5, instead of the normal N1. Pseudouridine ('psi') residues may serve to stabilize the conformation of rRNAs. This Caenorhabditis briggsae protein is Putative H/ACA ribonucleoprotein complex subunit 2-like protein.